We begin with the raw amino-acid sequence, 132 residues long: MNRIMHKSKIHRATVTEANLNYVGSITIDEDLMDAADVLENEKIQVVNNNNGARFETYVIPGPRGSGVICLNGAAARLVQPGDKVILITYGIYDDAEARQHRPTVIFLDDQNRIIADARREKAGETAPTGEA.

The active-site Schiff-base intermediate with substrate; via pyruvic acid is the Ser-25. Ser-25 bears the Pyruvic acid (Ser) mark. Residue Thr-57 participates in substrate binding. Residue Tyr-58 is the Proton donor of the active site. A substrate-binding site is contributed by 73 to 75 (GAA).

The protein belongs to the PanD family. Heterooctamer of four alpha and four beta subunits. Pyruvate serves as cofactor. In terms of processing, is synthesized initially as an inactive proenzyme, which is activated by self-cleavage at a specific serine bond to produce a beta-subunit with a hydroxyl group at its C-terminus and an alpha-subunit with a pyruvoyl group at its N-terminus.

The protein localises to the cytoplasm. The catalysed reaction is L-aspartate + H(+) = beta-alanine + CO2. The protein operates within cofactor biosynthesis; (R)-pantothenate biosynthesis; beta-alanine from L-aspartate: step 1/1. Its function is as follows. Catalyzes the pyruvoyl-dependent decarboxylation of aspartate to produce beta-alanine. This Heliobacterium modesticaldum (strain ATCC 51547 / Ice1) protein is Aspartate 1-decarboxylase.